Here is a 282-residue protein sequence, read N- to C-terminus: Epoxide hydrolase LasB (282 aa).

The lsd19A stretch occupies residues 1–133; sequence MPAETVRKEV…TDSSWTARPA (133 aa). Substrate is bound at residue Y14. D38 acts as the Proton acceptor; for 5-exo epoxide-opening cyclization activity in catalysis. Substrate-binding residues include E65 and H146. Residues 134-282 form a lsd19B region; that stretch reads PDEERRKELA…TDVSLLDPAA (149 aa). D170 functions as the Proton acceptor; for 6-endo epoxide-opening cyclization activity in the catalytic mechanism. Residues R177, E197, and Y251 each coordinate substrate.

Epoxide hydrolase responsible for the double epoxide-opening cyclization of bisepoxyprelasalocid A to form lasalocid A, a polyether antibiotic. In vitro, accepts various substrate analogs differing in the left segment of lasalocid and epoxide stereochemistry to afford products with excellent regioselectivity. The polypeptide is Epoxide hydrolase LasB (lsd19) (Streptomyces lasalocidi (Streptomyces lasaliensis)).